The chain runs to 156 residues: Small ribosomal subunit protein uS7 (156 aa).

Belongs to the universal ribosomal protein uS7 family. In terms of assembly, part of the 30S ribosomal subunit. Contacts proteins S9 and S11.

Functionally, one of the primary rRNA binding proteins, it binds directly to 16S rRNA where it nucleates assembly of the head domain of the 30S subunit. Is located at the subunit interface close to the decoding center, probably blocks exit of the E-site tRNA. In Burkholderia ambifaria (strain MC40-6), this protein is Small ribosomal subunit protein uS7.